A 107-amino-acid chain; its full sequence is UPF0145 protein PM1668 (107 aa).

The protein belongs to the UPF0145 family.

The chain is UPF0145 protein PM1668 from Pasteurella multocida (strain Pm70).